The sequence spans 105 residues: Large ribosomal subunit protein uL24 (105 aa).

Belongs to the universal ribosomal protein uL24 family. As to quaternary structure, part of the 50S ribosomal subunit.

In terms of biological role, one of two assembly initiator proteins, it binds directly to the 5'-end of the 23S rRNA, where it nucleates assembly of the 50S subunit. Its function is as follows. One of the proteins that surrounds the polypeptide exit tunnel on the outside of the subunit. This is Large ribosomal subunit protein uL24 from Psychrobacter sp. (strain PRwf-1).